The primary structure comprises 325 residues: Syntaxin-16 (325 aa).

The Cytoplasmic portion of the chain corresponds to 1–301; the sequence is MATRRLTDAF…AEQYQKKNRK (301 aa). Ser-41 is modified (phosphoserine). The region spanning 230 to 292 is the t-SNARE coiled-coil homology domain; sequence TLMVEERERE…EDGLKQLHKA (63 aa). The chain crosses the membrane as a helical; Anchor for type IV membrane protein span at residues 302–322; that stretch reads MLVILILFVIIIVLIVVLVGV. At 323–325 the chain is on the vesicular side; that stretch reads KSR.

The protein belongs to the syntaxin family. As to quaternary structure, interacts with GCC2. Interacts with BAIAP3; this interaction is increased in the presence of calcium. In terms of tissue distribution, ubiquitous.

It is found in the golgi apparatus membrane. The protein localises to the cytoplasm. In terms of biological role, SNARE involved in vesicular transport from the late endosomes to the trans-Golgi network. The polypeptide is Syntaxin-16 (STX16) (Homo sapiens (Human)).